A 479-amino-acid polypeptide reads, in one-letter code: MSAVLKPTPVSTADQAIADLSLAAWGRKEIKIAETEMPGLMAIREEFSKAQPLKGARITGSLHMTIQTAVLIETLQALGATVRWASCNIFSTQDHAAAAIAAAGTPVFAIKGESLKDYWDYTHAIFDFGPKGSQGEGPNMILDDGGDATLLMHLGQRAEKDLGVLSKPTSEEERILYAAIKAKLAVDPTWYTRKSAEIIGVTEETTTGVHRLNEMSAKGTLLFRAINVNDSVTKSKFDNLYGCRESLVDGIKRATDVMIAGKVACVAGYGDVGKGSAQALRALSAQVWVTEIDPINALQAAMEGYKVVTMEYAADKADIFVTTTGNRDVIRHEHMAAMKDQAIVCNIGHFDNEIDVASIEKYEWEEIKPQVDHITFPDGKKIILLAKGRLVNLGCGTGHPSFVMSSSFANQTIAQIELFTKPDAYQAGKVYVLPKHLDEKVARLHLKKVGAMLTELTDEQAAYIGVSKNGPYKPDTYRY.

3 residues coordinate substrate: threonine 65, aspartate 144, and glutamate 204. Residue threonine 205–threonine 207 coordinates NAD(+). 2 residues coordinate substrate: lysine 234 and aspartate 238. NAD(+) contacts are provided by residues asparagine 239, glycine 268–glycine 273, glutamate 291, asparagine 326, isoleucine 347–histidine 349, and asparagine 392.

This sequence belongs to the adenosylhomocysteinase family. NAD(+) is required as a cofactor.

The protein resides in the cytoplasm. It catalyses the reaction S-adenosyl-L-homocysteine + H2O = L-homocysteine + adenosine. The protein operates within amino-acid biosynthesis; L-homocysteine biosynthesis; L-homocysteine from S-adenosyl-L-homocysteine: step 1/1. Functionally, may play a key role in the regulation of the intracellular concentration of adenosylhomocysteine. The chain is Adenosylhomocysteinase from Variovorax paradoxus (strain S110).